The primary structure comprises 111 residues: UPF0060 membrane protein xcc-b100_1273 (111 aa).

A run of 4 helical transmembrane segments spans residues 8–28, 34–54, 62–82, and 91–111; these read LLLF…PYLW, SVWL…LLTL, VYAA…WWVD, and LLGA…PRSG.

This sequence belongs to the UPF0060 family.

It is found in the cell inner membrane. The chain is UPF0060 membrane protein xcc-b100_1273 from Xanthomonas campestris pv. campestris (strain B100).